The following is a 971-amino-acid chain: Mating-type switching protein swi1 (971 aa).

3 positions are modified to phosphoserine: Ser-528, Ser-536, and Ser-970.

In terms of assembly, fork protection complex (FPC) consisting of swi1 and swi3 interacts with mat1 cis-acting sequences and mat1-proximal polar-terminator of replication (RTS1).

Its subcellular location is the nucleus. Functionally, forms a fork protection complex (FPC) with swi3. FPC coordinates leading and lagging strand synthesis and moves with the replication fork. It is required for programmed fork-pausing which is necessary for mating-type switching. FPC stabilizes replication forks in a configuration that is recognized by replication checkpoint sensors. It is involved in termination at the mat1-proximal polar-terminator of replication (RTS1) and also required for activation of the Rad53-like checkpoint kinase cds1. The protein is Mating-type switching protein swi1 (swi1) of Schizosaccharomyces pombe (strain 972 / ATCC 24843) (Fission yeast).